Reading from the N-terminus, the 630-residue chain is Transposase B from transposon Tn554 (630 aa).

The region spanning 216–302 (TYFKQLVKRY…ILEGLFSTLL (87 aa)) is the Core-binding (CB) domain. A Tyr recombinase domain is found at 326–513 (AKPRFIDEFV…FDETLKNEFT (188 aa)). Catalysis depends on residues arginine 363, lysine 391, histidine 465, arginine 468, and histidine 491. The active-site O-(3'-phospho-DNA)-tyrosine intermediate is tyrosine 500.

The protein belongs to the 'phage' integrase family.

Its function is as follows. One of three proteins encoded by transposon Tn554 required for its transposition. This is Transposase B from transposon Tn554 (tnpB1) from Staphylococcus aureus (strain Mu50 / ATCC 700699).